A 284-amino-acid polypeptide reads, in one-letter code: Tropomyosin alpha-3 chain (284 aa).

Methionine 1 is modified (N-acetylmethionine). Residues methionine 1–leucine 43 form a disordered region. Positions methionine 1–isoleucine 284 form a coiled coil. Glutamate 2 carries the N-acetylalanine modification. Basic and acidic residues predominate over residues lysine 12–glutamate 40. Residue threonine 53 is modified to Phosphothreonine. Phosphoserine occurs at positions 61 and 87. Threonine 108 is modified (phosphothreonine). Phosphoserine is present on residues serine 206 and serine 215. Leucine 228 bears the N6-acetyllysine mark. Threonine 252 is subject to Phosphothreonine. Residue tyrosine 261 is modified to Phosphotyrosine. The residue at position 271 (serine 271) is a Phosphoserine. Threonine 282 bears the Phosphothreonine mark. Serine 283 bears the Phosphoserine mark.

Belongs to the tropomyosin family. Homodimer. Heterodimer of an alpha (TPM1, TPM3 or TPM4) and a beta (TPM2) chain. Interacts with TMOD1. Interacts with TNNT1.

The protein resides in the cytoplasm. Its subcellular location is the cytoskeleton. Its function is as follows. Binds to actin filaments in muscle and non-muscle cells. Plays a central role, in association with the troponin complex, in the calcium dependent regulation of vertebrate striated muscle contraction. Smooth muscle contraction is regulated by interaction with caldesmon. In non-muscle cells is implicated in stabilizing cytoskeleton actin filaments. In Bos taurus (Bovine), this protein is Tropomyosin alpha-3 chain (TPM3).